The following is a 299-amino-acid chain: Glycine--tRNA ligase alpha subunit (299 aa).

This sequence belongs to the class-II aminoacyl-tRNA synthetase family. As to quaternary structure, tetramer of two alpha and two beta subunits.

Its subcellular location is the cytoplasm. It carries out the reaction tRNA(Gly) + glycine + ATP = glycyl-tRNA(Gly) + AMP + diphosphate. This Lactiplantibacillus plantarum (strain ATCC BAA-793 / NCIMB 8826 / WCFS1) (Lactobacillus plantarum) protein is Glycine--tRNA ligase alpha subunit.